Reading from the N-terminus, the 570-residue chain is Mitoguardin 1 (570 aa).

A helical transmembrane segment spans residues 34–54 (GLKKIIAVAAISGVSLIFLAC).

It belongs to the mitoguardin family. Homodimer and heterodimer; forms heterodimers with miga2.

The protein resides in the mitochondrion outer membrane. Functionally, regulator of mitochondrial fusion: acts by forming homo- and heterodimers at the mitochondrial outer membrane and facilitating the formation of pld6/MitoPLD dimers. May act by regulating phospholipid metabolism via pld6/MitoPLD. This chain is Mitoguardin 1, found in Xenopus laevis (African clawed frog).